A 178-amino-acid polypeptide reads, in one-letter code: Interleukin-10 (178 aa).

An N-terminal signal peptide occupies residues 1-18; the sequence is MHSSALLCYLVFLAGVGA. Cystine bridges form between Cys30–Cys126 and Cys80–Cys132. Residue Asn67 is glycosylated (N-linked (GlcNAc...) asparagine). Asn134 carries N-linked (GlcNAc...) asparagine glycosylation.

It belongs to the IL-10 family. Homodimer. Interacts with IL10RA and IL10RB.

The protein localises to the secreted. Major immune regulatory cytokine that acts on many cells of the immune system where it has profound anti-inflammatory functions, limiting excessive tissue disruption caused by inflammation. Mechanistically, IL10 binds to its heterotetrameric receptor comprising IL10RA and IL10RB leading to JAK1 and STAT2-mediated phosphorylation of STAT3. In turn, STAT3 translocates to the nucleus where it drives expression of anti-inflammatory mediators. Targets antigen-presenting cells (APCs) such as macrophages and monocytes and inhibits their release of pro-inflammatory cytokines including granulocyte-macrophage colony-stimulating factor /GM-CSF, granulocyte colony-stimulating factor/G-CSF, IL-1 alpha, IL-1 beta, IL-6, IL-8 and TNF-alpha. Also interferes with antigen presentation by reducing the expression of MHC-class II and co-stimulatory molecules, thereby inhibiting their ability to induce T cell activation. In addition, controls the inflammatory response of macrophages by reprogramming essential metabolic pathways including mTOR signaling. The polypeptide is Interleukin-10 (IL10) (Equus caballus (Horse)).